We begin with the raw amino-acid sequence, 1070 residues long: Phosphatidylinositol 4,5-bisphosphate 3-kinase catalytic subunit beta isoform (1070 aa).

Positions 26 to 115 (SDGSISVDFL…LPVLKLVTRS (90 aa)) constitute a PI3K-ABD domain. In terms of domain architecture, PI3K-RBD spans 194-285 (GGKLVVAVHF…RTLPHFILVE (92 aa)). Phosphoserine is present on serine 324. The C2 PI3K-type domain maps to 327-496 (WGNNNPFQIV…NATALHIKFP (170 aa)). Positions 410 to 418 (KVKTKKSTK) match the Nuclear localization signal (NLS) motif. The region spanning 524-701 (ANVSSRGGKK…GVILEAYCRG (178 aa)) is the PIK helical domain. Residues 772-1053 (YVEKCRYMDS…KFDEALRESW (282 aa)) enclose the PI3K/PI4K catalytic domain. A G-loop region spans residues 778–784 (YMDSKMK). Positions 916–924 (GIGDRHSDN) are catalytic loop. The activation loop stretch occupies residues 935–961 (HIDFGHILGNFKSKFGIKRERVPFILT). Serine 1070 carries the phosphoserine; by autocatalysis modification.

It belongs to the PI3/PI4-kinase family. In terms of assembly, heterodimer of a catalytic subunit PIK3CB and a p85 regulatory subunit (PIK3R1, PIK3R2 or PIK3R3). Interaction with PIK3R2 is required for nuclear localization and nuclear export. Part of a complex with PIK3R1 and PTEN. Binding to PTEN may antagonize the lipid kinase activity under normal growth conditions. Part of a complex involved in autophagosome formation composed of PIK3C3 and PIK3R4. Interacts with BECN1, ATG14 and RAB5A. Autophosphorylation at Ser-1070 negatively regulates the phosphatidylinositol-4,5-bisphosphate 3-kinase activity.

Its subcellular location is the cytoplasm. It localises to the nucleus. The enzyme catalyses a 1,2-diacyl-sn-glycero-3-phospho-(1D-myo-inositol-4,5-bisphosphate) + ATP = a 1,2-diacyl-sn-glycero-3-phospho-(1D-myo-inositol-3,4,5-trisphosphate) + ADP + H(+). It catalyses the reaction 1-octadecanoyl-2-(5Z,8Z,11Z,14Z)-eicosatetraenoyl-sn-glycero-3-phospho-1D-myo-inositol 4,5-bisphosphate + ATP = 1-octadecanoyl-2-(5Z,8Z,11Z,14Z-eicosatetraenoyl)-sn-glycero-3-phospho-(1D-myo-inositol 3,4,5-triphosphate) + ADP + H(+). It carries out the reaction L-seryl-[protein] + ATP = O-phospho-L-seryl-[protein] + ADP + H(+). It participates in phospholipid metabolism; phosphatidylinositol phosphate biosynthesis. In terms of biological role, phosphoinositide-3-kinase (PI3K) phosphorylates phosphatidylinositol (PI) derivatives at position 3 of the inositol ring to produce 3-phosphoinositides. Uses ATP and PtdIns(4,5)P2 (phosphatidylinositol 4,5-bisphosphate) to generate phosphatidylinositol 3,4,5-trisphosphate (PIP3). PIP3 plays a key role by recruiting PH domain-containing proteins to the membrane, including AKT1 and PDPK1, activating signaling cascades involved in cell growth, survival, proliferation, motility and morphology. Involved in the activation of AKT1 upon stimulation by G-protein coupled receptors (GPCRs) ligands such as CXCL12, sphingosine 1-phosphate, and lysophosphatidic acid. May also act downstream receptor tyrosine kinases. Required in different signaling pathways for stable platelet adhesion and aggregation. Plays a role in platelet activation signaling triggered by GPCRs, alpha-IIb/beta-3 integrins (ITGA2B/ ITGB3) and ITAM (immunoreceptor tyrosine-based activation motif)-bearing receptors such as GP6. Regulates the strength of adhesion of ITGA2B/ ITGB3 activated receptors necessary for the cellular transmission of contractile forces. Required for platelet aggregation induced by F2 (thrombin) and thromboxane A2 (TXA2). Has a role in cell survival. May have a role in cell migration. Involved in the early stage of autophagosome formation. Modulates the intracellular level of PtdIns3P (phosphatidylinositol 3-phosphate) and activates PIK3C3 kinase activity. May act as a scaffold, independently of its lipid kinase activity to positively regulate autophagy. May have a role in insulin signaling as scaffolding protein in which the lipid kinase activity is not required. May have a kinase-independent function in regulating cell proliferation and in clathrin-mediated endocytosis. Mediator of oncogenic signal in cell lines lacking PTEN. The lipid kinase activity is necessary for its role in oncogenic transformation. Required for the growth of ERBB2 and RAS driven tumors. Also has a protein kinase activity showing autophosphorylation. This Rattus norvegicus (Rat) protein is Phosphatidylinositol 4,5-bisphosphate 3-kinase catalytic subunit beta isoform (Pik3cb).